The chain runs to 81 residues: MNPLISAASVIAAGLAVGLASIGPGIGQGTAAGQAVEGIARQPEAEGKIRGTLLLSLAFMEALTIYGLVVALALLFANPFV.

The next 2 helical transmembrane spans lie at 7-27 and 57-77; these read AASV…PGIG and LAFM…LLFA.

Belongs to the ATPase C chain family. F-type ATPases have 2 components, F(1) - the catalytic core - and F(0) - the membrane proton channel. F(1) has five subunits: alpha(3), beta(3), gamma(1), delta(1), epsilon(1). F(0) has four main subunits: a(1), b(1), b'(1) and c(10-14). The alpha and beta chains form an alternating ring which encloses part of the gamma chain. F(1) is attached to F(0) by a central stalk formed by the gamma and epsilon chains, while a peripheral stalk is formed by the delta, b and b' chains.

It is found in the plastid. It localises to the chloroplast thylakoid membrane. Functionally, f(1)F(0) ATP synthase produces ATP from ADP in the presence of a proton or sodium gradient. F-type ATPases consist of two structural domains, F(1) containing the extramembraneous catalytic core and F(0) containing the membrane proton channel, linked together by a central stalk and a peripheral stalk. During catalysis, ATP synthesis in the catalytic domain of F(1) is coupled via a rotary mechanism of the central stalk subunits to proton translocation. In terms of biological role, key component of the F(0) channel; it plays a direct role in translocation across the membrane. A homomeric c-ring of between 10-14 subunits forms the central stalk rotor element with the F(1) delta and epsilon subunits. The protein is ATP synthase subunit c, chloroplastic of Pelargonium hortorum (Common geranium).